We begin with the raw amino-acid sequence, 289 residues long: Prepilin leader peptidase/N-methyltransferase (289 aa).

A helical membrane pass occupies residues 13 to 33 (AFVLCALVLGLLVGSFLNVVI). Cys72, Cys75, Cys97, and Cys100 together coordinate Zn(2+). The next 5 helical transmembrane spans lie at 128–148 (FSWQ…MSMI), 159–179 (LVLP…FASL), 183–203 (LWGA…FKLV), 228–248 (VLPL…TVML), and 256–276 (GTPI…LLWG).

This sequence belongs to the peptidase A24 family. It depends on Zn(2+) as a cofactor.

The protein localises to the cell inner membrane. The enzyme catalyses Typically cleaves a -Gly-|-Phe- bond to release an N-terminal, basic peptide of 5-8 residues from type IV prepilin, and then N-methylates the new N-terminal amino group, the methyl donor being S-adenosyl-L-methionine.. In terms of biological role, plays an essential role in type IV pili and type II pseudopili formation by proteolytically removing the leader sequence from substrate proteins and subsequently monomethylating the alpha-amino group of the newly exposed N-terminal phenylalanine. The polypeptide is Prepilin leader peptidase/N-methyltransferase (pilD) (Stutzerimonas stutzeri (Pseudomonas stutzeri)).